The sequence spans 184 residues: Ribosome-recycling factor (184 aa).

It belongs to the RRF family.

It localises to the cytoplasm. Its function is as follows. Responsible for the release of ribosomes from messenger RNA at the termination of protein biosynthesis. May increase the efficiency of translation by recycling ribosomes from one round of translation to another. This chain is Ribosome-recycling factor, found in Caldicellulosiruptor saccharolyticus (strain ATCC 43494 / DSM 8903 / Tp8T 6331).